The following is a 515-amino-acid chain: Putative asparagine synthetase [glutamine-hydrolyzing] 2 (515 aa).

Catalysis depends on C2, which acts as the For GATase activity. One can recognise a Glutamine amidotransferase type-2 domain in the interval C2–D229. Residues R52–L56, N92–E94, and D114 contribute to the L-glutamine site. ATP is bound by residues I306 and S378 to G379.

It belongs to the asparagine synthetase family.

It catalyses the reaction L-aspartate + L-glutamine + ATP + H2O = L-asparagine + L-glutamate + AMP + diphosphate + H(+). It participates in amino-acid biosynthesis; L-asparagine biosynthesis; L-asparagine from L-aspartate (L-Gln route): step 1/1. This is Putative asparagine synthetase [glutamine-hydrolyzing] 2 from Methanocaldococcus jannaschii (strain ATCC 43067 / DSM 2661 / JAL-1 / JCM 10045 / NBRC 100440) (Methanococcus jannaschii).